Here is a 29-residue protein sequence, read N- to C-terminus: Toxin TdII-3 (29 aa).

The region spanning 1-29 (KDGYLVGTDGCKYGCFTRPGHFCANEECL) is the LCN-type CS-alpha/beta domain.

It belongs to the long (4 C-C) scorpion toxin superfamily. Sodium channel inhibitor family. Beta subfamily. In terms of tissue distribution, expressed by the venom gland.

The protein resides in the secreted. Its function is as follows. Binds voltage-independently to sodium channels (Nav) and shifts the voltage of activation toward more negative potentials. This toxin is active against mammals and also affects neuromuscular preparations of frog. In Tityus discrepans (Venezuelan scorpion), this protein is Toxin TdII-3.